The chain runs to 217 residues: Thymidylate kinase (217 aa).

14–21 (GNEGSGKT) contacts ATP.

Belongs to the thymidylate kinase family.

The catalysed reaction is dTMP + ATP = dTDP + ADP. Functionally, phosphorylation of dTMP to form dTDP in both de novo and salvage pathways of dTTP synthesis. The sequence is that of Thymidylate kinase from Orientia tsutsugamushi (strain Ikeda) (Rickettsia tsutsugamushi).